Here is a 116-residue protein sequence, read N- to C-terminus: Protein Wnt-5a (116 aa).

A lipid anchor (O-palmitoleoyl serine; by PORCN) is attached at Ser-1. N-linked (GlcNAc...) asparagine glycans are attached at residues Asn-69 and Asn-83. An intrachain disulfide couples Cys-82 to Cys-97.

Belongs to the Wnt family. Palmitoleoylation is required for efficient binding to frizzled receptors. Depalmitoleoylation leads to Wnt signaling pathway inhibition.

The protein localises to the secreted. Its subcellular location is the extracellular space. It is found in the extracellular matrix. Its function is as follows. Ligand for members of the frizzled family of seven transmembrane receptors. Can activate or inhibit canonical Wnt signaling, depending on receptor context. Required during embryogenesis for extension of the primary anterior-posterior axis. The protein is Protein Wnt-5a (WNT5A) of Meleagris gallopavo (Wild turkey).